The primary structure comprises 173 residues: MDRYNPPRRNGNSKKNEVVITGGRTQRIDFEKDVNKTTILPAGASVGRRGRGAGWYCEACNETYKDSLSWLDHLNSTQHLRKTRTVIIEKRATLEEVKERMEYWRRQLLEPEKGSEEYSLKERVERYHQELEAKKLRRKQKKVNKEKNSPRLVGENTELAAIMGISSFGSTNL.

The Matrin-type zinc-finger motif lies at W55–T85. Residues S119–S149 adopt a coiled-coil conformation.

In terms of assembly, component of the 25S U4/U6.U5 tri-snRNP particle, a subcomplex of the spliceosome.

The protein localises to the cytoplasm. Its subcellular location is the cytoskeleton. It is found in the microtubule organizing center. It localises to the spindle pole body. The protein resides in the nucleus. The protein is U4/U6.U5 small nuclear ribonucleoprotein component snu23 (snu23) of Schizosaccharomyces pombe (strain 972 / ATCC 24843) (Fission yeast).